A 42-amino-acid chain; its full sequence is Daisho1 (42 aa).

The N-terminal stretch at 1–20 (MKFFQAAALLLAMFAALANA) is a signal peptide. Residues 21–26 (EPVPQP) constitute a propeptide, removed by a dipeptidylpeptidase. T41 is modified (threonine amide).

Hemolymph (at protein level).

It localises to the secreted. Its function is as follows. Peptide which plays a role in the humoral immune response to a subset of filamentous fungi, including F.oxysporum and F.verticillioides. The polypeptide is Daisho1 (Drosophila melanogaster (Fruit fly)).